The primary structure comprises 116 residues: Aspartate 1-decarboxylase (116 aa).

Residue serine 25 is the Schiff-base intermediate with substrate; via pyruvic acid of the active site. Serine 25 is modified (pyruvic acid (Ser)). Substrate is bound at residue threonine 57. Catalysis depends on tyrosine 58, which acts as the Proton donor. 73 to 75 (GAA) contacts substrate.

Belongs to the PanD family. As to quaternary structure, heterooctamer of four alpha and four beta subunits. It depends on pyruvate as a cofactor. Is synthesized initially as an inactive proenzyme, which is activated by self-cleavage at a specific serine bond to produce a beta-subunit with a hydroxyl group at its C-terminus and an alpha-subunit with a pyruvoyl group at its N-terminus.

Its subcellular location is the cytoplasm. It carries out the reaction L-aspartate + H(+) = beta-alanine + CO2. The protein operates within cofactor biosynthesis; (R)-pantothenate biosynthesis; beta-alanine from L-aspartate: step 1/1. Functionally, catalyzes the pyruvoyl-dependent decarboxylation of aspartate to produce beta-alanine. This Fervidobacterium nodosum (strain ATCC 35602 / DSM 5306 / Rt17-B1) protein is Aspartate 1-decarboxylase.